Consider the following 641-residue polypeptide: Chaperone protein HtpG (641 aa).

Residues 1–348 (MTTATEKQTL…SNDLSLNVSR (348 aa)) are a; substrate-binding. The segment at 349–565 (EILQNDKAVE…AYDMGVQMRR (217 aa)) is b. The tract at residues 566-641 (IMEAAGQALP…KLLLELSNAG (76 aa)) is c.

Belongs to the heat shock protein 90 family. In terms of assembly, homodimer.

Its subcellular location is the cytoplasm. Its function is as follows. Molecular chaperone. Has ATPase activity. The protein is Chaperone protein HtpG of Hahella chejuensis (strain KCTC 2396).